The chain runs to 417 residues: Serine hydroxymethyltransferase (417 aa).

(6S)-5,6,7,8-tetrahydrofolate is bound by residues Leu122 and 126–128 (GHL). An N6-(pyridoxal phosphate)lysine modification is found at Lys230. Residue 355 to 357 (SPF) participates in (6S)-5,6,7,8-tetrahydrofolate binding.

The protein belongs to the SHMT family. In terms of assembly, homodimer. Pyridoxal 5'-phosphate serves as cofactor.

Its subcellular location is the cytoplasm. It carries out the reaction (6R)-5,10-methylene-5,6,7,8-tetrahydrofolate + glycine + H2O = (6S)-5,6,7,8-tetrahydrofolate + L-serine. It functions in the pathway one-carbon metabolism; tetrahydrofolate interconversion. It participates in amino-acid biosynthesis; glycine biosynthesis; glycine from L-serine: step 1/1. In terms of biological role, catalyzes the reversible interconversion of serine and glycine with tetrahydrofolate (THF) serving as the one-carbon carrier. This reaction serves as the major source of one-carbon groups required for the biosynthesis of purines, thymidylate, methionine, and other important biomolecules. Also exhibits THF-independent aldolase activity toward beta-hydroxyamino acids, producing glycine and aldehydes, via a retro-aldol mechanism. The chain is Serine hydroxymethyltransferase from Francisella philomiragia subsp. philomiragia (strain ATCC 25017 / CCUG 19701 / FSC 153 / O#319-036).